A 272-amino-acid polypeptide reads, in one-letter code: D-aminoacyl-tRNA deacylase (272 aa).

The protein belongs to the DtdA deacylase family. Monomer. Zn(2+) is required as a cofactor.

It catalyses the reaction a D-aminoacyl-tRNA + H2O = a tRNA + a D-alpha-amino acid + H(+). It carries out the reaction glycyl-tRNA(Ala) + H2O = tRNA(Ala) + glycine + H(+). In terms of biological role, D-aminoacyl-tRNA deacylase with broad substrate specificity. By recycling D-aminoacyl-tRNA to D-amino acids and free tRNA molecules, this enzyme counteracts the toxicity associated with the formation of D-aminoacyl-tRNA entities in vivo. In Desulfurococcus amylolyticus (strain DSM 18924 / JCM 16383 / VKM B-2413 / 1221n) (Desulfurococcus kamchatkensis), this protein is D-aminoacyl-tRNA deacylase.